We begin with the raw amino-acid sequence, 189 residues long: Probable nicotinate-nucleotide adenylyltransferase (189 aa).

The protein belongs to the NadD family.

It carries out the reaction nicotinate beta-D-ribonucleotide + ATP + H(+) = deamido-NAD(+) + diphosphate. It functions in the pathway cofactor biosynthesis; NAD(+) biosynthesis; deamido-NAD(+) from nicotinate D-ribonucleotide: step 1/1. Catalyzes the reversible adenylation of nicotinate mononucleotide (NaMN) to nicotinic acid adenine dinucleotide (NaAD). The protein is Probable nicotinate-nucleotide adenylyltransferase of Exiguobacterium sibiricum (strain DSM 17290 / CCUG 55495 / CIP 109462 / JCM 13490 / 255-15).